The following is a 490-amino-acid chain: Cytochrome P450 2C13, male-specific (490 aa).

Cysteine 435 contacts heme.

It belongs to the cytochrome P450 family. Heme serves as cofactor. As to expression, liver, and to a lesser extent in prostate, kidney, heart and brain.

The protein localises to the endoplasmic reticulum membrane. Its subcellular location is the microsome membrane. It carries out the reaction an organic molecule + reduced [NADPH--hemoprotein reductase] + O2 = an alcohol + oxidized [NADPH--hemoprotein reductase] + H2O + H(+). Its function is as follows. Cytochromes P450 are a group of heme-thiolate monooxygenases. In liver microsomes, this enzyme is involved in an NADPH-dependent electron transport pathway. It oxidizes a variety of structurally unrelated compounds, including steroids, fatty acids, and xenobiotics. The polypeptide is Cytochrome P450 2C13, male-specific (Cyp2c13) (Rattus norvegicus (Rat)).